We begin with the raw amino-acid sequence, 46 residues long: Hellethionin-D (46 aa).

Intrachain disulfides connect Cys-3–Cys-40, Cys-4–Cys-32, Cys-12–Cys-30, and Cys-16–Cys-26.

This sequence belongs to the plant thionin (TC 1.C.44) family. 4 C-C subfamily.

The protein resides in the secreted. Its function is as follows. Thionins are small plant proteins which are toxic to animal cells. They seem to exert their toxic effect at the level of the cell membrane. Their precise function is not known. This is Hellethionin-D from Helleborus purpurascens (Purple hellebore).